Consider the following 336-residue polypeptide: Aspartate--ammonia ligase (336 aa).

It belongs to the class-II aminoacyl-tRNA synthetase family. AsnA subfamily.

The protein localises to the cytoplasm. The catalysed reaction is L-aspartate + NH4(+) + ATP = L-asparagine + AMP + diphosphate + H(+). It functions in the pathway amino-acid biosynthesis; L-asparagine biosynthesis; L-asparagine from L-aspartate (ammonia route): step 1/1. The protein is Aspartate--ammonia ligase of Ligilactobacillus salivarius (strain UCC118) (Lactobacillus salivarius).